The chain runs to 167 residues: Probable chemoreceptor glutamine deamidase CheD (167 aa).

Belongs to the CheD family.

The catalysed reaction is L-glutaminyl-[protein] + H2O = L-glutamyl-[protein] + NH4(+). Probably deamidates glutamine residues to glutamate on methyl-accepting chemotaxis receptors (MCPs), playing an important role in chemotaxis. The protein is Probable chemoreceptor glutamine deamidase CheD of Moorella thermoacetica (strain ATCC 39073 / JCM 9320).